Here is a 126-residue protein sequence, read N- to C-terminus: Glycine cleavage system H protein (126 aa).

Positions 21-103 constitute a Lipoyl-binding domain; the sequence is TVTIGISEHA…YEGGWIVKVK (83 aa). Position 62 is an N6-lipoyllysine (lysine 62).

Belongs to the GcvH family. The glycine cleavage system is composed of four proteins: P, T, L and H. Requires (R)-lipoate as cofactor.

Functionally, the glycine cleavage system catalyzes the degradation of glycine. The H protein shuttles the methylamine group of glycine from the P protein to the T protein. This Vibrio parahaemolyticus serotype O3:K6 (strain RIMD 2210633) protein is Glycine cleavage system H protein.